Consider the following 360-residue polypeptide: Histidinol-phosphate aminotransferase 2 (360 aa).

K218 carries the post-translational modification N6-(pyridoxal phosphate)lysine.

This sequence belongs to the class-II pyridoxal-phosphate-dependent aminotransferase family. Histidinol-phosphate aminotransferase subfamily. As to quaternary structure, homodimer. Pyridoxal 5'-phosphate is required as a cofactor.

It carries out the reaction L-histidinol phosphate + 2-oxoglutarate = 3-(imidazol-4-yl)-2-oxopropyl phosphate + L-glutamate. It functions in the pathway amino-acid biosynthesis; L-histidine biosynthesis; L-histidine from 5-phospho-alpha-D-ribose 1-diphosphate: step 7/9. The polypeptide is Histidinol-phosphate aminotransferase 2 (Nitrosococcus oceani (strain ATCC 19707 / BCRC 17464 / JCM 30415 / NCIMB 11848 / C-107)).